An 89-amino-acid chain; its full sequence is MSLDTAEKQKLIENHQVHPTDTGSAEVQVAMLSKRISKLSDHLQGNIHDFASRQGLLKMIGKRKRLLSYLKDKNVQKYQELVKKIGIRG.

A compositionally biased stretch (basic and acidic residues) spans 1 to 18 (MSLDTAEKQKLIENHQVH). The disordered stretch occupies residues 1 to 23 (MSLDTAEKQKLIENHQVHPTDTG).

The protein belongs to the universal ribosomal protein uS15 family. As to quaternary structure, part of the 30S ribosomal subunit. Forms a bridge to the 50S subunit in the 70S ribosome, contacting the 23S rRNA.

In terms of biological role, one of the primary rRNA binding proteins, it binds directly to 16S rRNA where it helps nucleate assembly of the platform of the 30S subunit by binding and bridging several RNA helices of the 16S rRNA. Its function is as follows. Forms an intersubunit bridge (bridge B4) with the 23S rRNA of the 50S subunit in the ribosome. The sequence is that of Small ribosomal subunit protein uS15 from Prochlorococcus marinus (strain MIT 9301).